Consider the following 135-residue polypeptide: Germinal center-associated signaling and motility-like protein (135 aa).

A disordered region spans residues 1–68; that stretch reads MGNYLLRKLS…ENGSGSEEVC (68 aa). The segment covering 22 to 48 has biased composition (basic and acidic residues); it reads GNPDEERKRQEMTTFERKLQDQDKKSQ. The stretch at 26–50 forms a coiled coil; sequence EERKRQEMTTFERKLQDQDKKSQEV. Over residues 51-66 the composition is skewed to low complexity; that stretch reads SSTSNQENENGSGSEE.

This Homo sapiens (Human) protein is Germinal center-associated signaling and motility-like protein (GCSAML).